We begin with the raw amino-acid sequence, 112 residues long: Putative pterin-4-alpha-carbinolamine dehydratase (112 aa).

The protein belongs to the pterin-4-alpha-carbinolamine dehydratase family.

The enzyme catalyses (4aS,6R)-4a-hydroxy-L-erythro-5,6,7,8-tetrahydrobiopterin = (6R)-L-erythro-6,7-dihydrobiopterin + H2O. This chain is Putative pterin-4-alpha-carbinolamine dehydratase, found in Shewanella sp. (strain MR-4).